The primary structure comprises 293 residues: 1D-myo-inositol 2-acetamido-2-deoxy-alpha-D-glucopyranoside deacetylase (293 aa).

Zn(2+) contacts are provided by His15, Asp18, and His148.

This sequence belongs to the MshB deacetylase family. The cofactor is Zn(2+).

It catalyses the reaction 1D-myo-inositol 2-acetamido-2-deoxy-alpha-D-glucopyranoside + H2O = 1D-myo-inositol 2-amino-2-deoxy-alpha-D-glucopyranoside + acetate. Its function is as follows. Catalyzes the deacetylation of 1D-myo-inositol 2-acetamido-2-deoxy-alpha-D-glucopyranoside (GlcNAc-Ins) in the mycothiol biosynthesis pathway. This chain is 1D-myo-inositol 2-acetamido-2-deoxy-alpha-D-glucopyranoside deacetylase, found in Corynebacterium diphtheriae (strain ATCC 700971 / NCTC 13129 / Biotype gravis).